The chain runs to 324 residues: Dehydrogenase/reductase SDR family member 7C-A (324 aa).

A signal peptide spans 1–17 (MAVPSVMVLPLLIVVFA). 41 to 65 (VITDAVSGMGSECARLFHAGGARLV) contributes to the NAD(+) binding site. S178 provides a ligand contact to substrate. Y191 serves as the catalytic Proton acceptor.

Belongs to the short-chain dehydrogenases/reductases (SDR) family.

The protein resides in the secreted. Functionally, putative oxidoreductase. In Danio rerio (Zebrafish), this protein is Dehydrogenase/reductase SDR family member 7C-A (dhrs7ca).